A 139-amino-acid chain; its full sequence is Small ribosomal subunit protein uS12 (139 aa).

The tract at residues 119 to 139 (GVDKRRQQRSAYGAKKPKPKS) is disordered.

The protein belongs to the universal ribosomal protein uS12 family. Part of the 30S ribosomal subunit. Contacts proteins S8 and S17. May interact with IF1 in the 30S initiation complex.

Its function is as follows. With S4 and S5 plays an important role in translational accuracy. Functionally, interacts with and stabilizes bases of the 16S rRNA that are involved in tRNA selection in the A site and with the mRNA backbone. Located at the interface of the 30S and 50S subunits, it traverses the body of the 30S subunit contacting proteins on the other side and probably holding the rRNA structure together. The combined cluster of proteins S8, S12 and S17 appears to hold together the shoulder and platform of the 30S subunit. The sequence is that of Small ribosomal subunit protein uS12 from Mycoplasma genitalium (strain ATCC 33530 / DSM 19775 / NCTC 10195 / G37) (Mycoplasmoides genitalium).